Reading from the N-terminus, the 274-residue chain is Pyrroline-5-carboxylate reductase 3 (274 aa).

Ala2 is modified (N-acetylalanine).

This sequence belongs to the pyrroline-5-carboxylate reductase family. In terms of assembly, homodecamer; composed of 5 homodimers.

The protein resides in the cytoplasm. The catalysed reaction is L-proline + NADP(+) = (S)-1-pyrroline-5-carboxylate + NADPH + 2 H(+). It carries out the reaction L-proline + NAD(+) = (S)-1-pyrroline-5-carboxylate + NADH + 2 H(+). Its pathway is amino-acid biosynthesis; L-proline biosynthesis; L-proline from L-glutamate 5-semialdehyde: step 1/1. In terms of biological role, oxidoreductase that catalyzes the last step in proline biosynthesis, which corresponds to the reduction of pyrroline-5-carboxylate (P5C) to L-proline using NAD(P)H. Proline is synthesized from either glutamate or ornithine; both are converted to P5C, and then to proline via pyrroline-5-carboxylate reductases (PYCRs). PYCR3 is exclusively linked to the biosynthesis of proline from ornithine. This chain is Pyrroline-5-carboxylate reductase 3, found in Macaca fascicularis (Crab-eating macaque).